A 276-amino-acid polypeptide reads, in one-letter code: Thymidylate synthase (276 aa).

Arginine 26 provides a ligand contact to dUMP. Histidine 56 lines the (6R)-5,10-methylene-5,6,7,8-tetrahydrofolate pocket. 131-132 is a binding site for dUMP; the sequence is RR. Catalysis depends on cysteine 151, which acts as the Nucleophile. Residues 178 to 181, asparagine 189, and 219 to 221 each bind dUMP; these read RSAD and HIY. A (6R)-5,10-methylene-5,6,7,8-tetrahydrofolate-binding site is contributed by aspartate 181. Alanine 275 is a (6R)-5,10-methylene-5,6,7,8-tetrahydrofolate binding site.

This sequence belongs to the thymidylate synthase family. Bacterial-type ThyA subfamily. As to quaternary structure, homodimer.

It localises to the cytoplasm. It catalyses the reaction dUMP + (6R)-5,10-methylene-5,6,7,8-tetrahydrofolate = 7,8-dihydrofolate + dTMP. It functions in the pathway pyrimidine metabolism; dTTP biosynthesis. In terms of biological role, catalyzes the reductive methylation of 2'-deoxyuridine-5'-monophosphate (dUMP) to 2'-deoxythymidine-5'-monophosphate (dTMP) while utilizing 5,10-methylenetetrahydrofolate (mTHF) as the methyl donor and reductant in the reaction, yielding dihydrofolate (DHF) as a by-product. This enzymatic reaction provides an intracellular de novo source of dTMP, an essential precursor for DNA biosynthesis. The sequence is that of Thymidylate synthase from Polaromonas naphthalenivorans (strain CJ2).